Here is a 254-residue protein sequence, read N- to C-terminus: Alcohol dehydrogenase 1 (254 aa).

Position 10-33 (10-33 (FVAGLGGIGFDTSREIVKSGPKNL)) interacts with NAD(+). A substrate-binding site is contributed by Ser-138. The Proton acceptor role is filled by Tyr-151.

The protein belongs to the short-chain dehydrogenases/reductases (SDR) family. As to quaternary structure, homodimer.

The catalysed reaction is a primary alcohol + NAD(+) = an aldehyde + NADH + H(+). It catalyses the reaction a secondary alcohol + NAD(+) = a ketone + NADH + H(+). This Drosophila mulleri (Fruit fly) protein is Alcohol dehydrogenase 1 (Adh1).